The primary structure comprises 158 residues: NADPH-dependent 7-cyano-7-deazaguanine reductase (158 aa).

Residue cysteine 56 is the Thioimide intermediate of the active site. Residue aspartate 63 is the Proton donor of the active site. Substrate-binding positions include 78–80 (LES) and 97–98 (HE).

The protein belongs to the GTP cyclohydrolase I family. QueF type 1 subfamily.

It is found in the cytoplasm. The catalysed reaction is 7-aminomethyl-7-carbaguanine + 2 NADP(+) = 7-cyano-7-deazaguanine + 2 NADPH + 3 H(+). It participates in tRNA modification; tRNA-queuosine biosynthesis. Catalyzes the NADPH-dependent reduction of 7-cyano-7-deazaguanine (preQ0) to 7-aminomethyl-7-deazaguanine (preQ1). The protein is NADPH-dependent 7-cyano-7-deazaguanine reductase of Nitrobacter hamburgensis (strain DSM 10229 / NCIMB 13809 / X14).